A 394-amino-acid polypeptide reads, in one-letter code: Tyrosine--tRNA ligase, cytoplasmic (394 aa).

An N-acetylserine modification is found at Ser-2. L-tyrosine is bound at residue Tyr-43. A 'HIGH' region motif is present at residues 48 to 56 (PTGRPHCGY). Positions 170, 174, 177, and 192 each coordinate L-tyrosine. The short motif at 227 to 231 (KMSAS) is the 'KMSKS' region element. The residue at position 235 (Ser-235) is a Phosphoserine. The disordered stretch occupies residues 348-394 (QEASEKGYPVATPQKSKKAKKPKNKGTKYPGATKTNEIATKLEETKL). Thr-359 bears the Phosphothreonine mark. The Nuclear localization signal motif lies at 360–378 (PQKSKKAKKPKNKGTKYPG). Positions 362-373 (KSKKAKKPKNKG) are enriched in basic residues.

It belongs to the class-I aminoacyl-tRNA synthetase family. Homodimer. Interacts with KNR4/SMI1.

The protein localises to the cytoplasm. Its subcellular location is the nucleus. It carries out the reaction tRNA(Tyr) + L-tyrosine + ATP = L-tyrosyl-tRNA(Tyr) + AMP + diphosphate + H(+). Inhibited by N-ethylmaleimide and p-chloromercuribenzoate. Functionally, catalyzes the attachment of L-tyrosine to tRNA(Tyr) in a two-step reaction: L-tyrosine is first activated by ATP to form Tyr-AMP and then transferred to the acceptor end of tRNA(Tyr). The specificity determinants on tRNA(Tyr) are the base pair C1-G72, the discriminator residue A73, and the three anticodon bases G34, U35 and A36. Also involved in nuclear tRNA export. Also attaches D-Tyr to tRNA(Tyr), this reaction is about 150-fold less efficient than attachment of L-Tyr. In Saccharomyces cerevisiae (strain ATCC 204508 / S288c) (Baker's yeast), this protein is Tyrosine--tRNA ligase, cytoplasmic.